The primary structure comprises 214 residues: Imidazole glycerol phosphate synthase subunit HisH 2 (214 aa).

Residues 2–210 form the Glutamine amidotransferase type-1 domain; the sequence is KIVIIDYDMG…LDWVKIQKLG (209 aa). The Nucleophile role is filled by cysteine 82. Active-site residues include histidine 185 and glutamate 187.

As to quaternary structure, heterodimer of HisH and HisF.

Its subcellular location is the cytoplasm. The enzyme catalyses 5-[(5-phospho-1-deoxy-D-ribulos-1-ylimino)methylamino]-1-(5-phospho-beta-D-ribosyl)imidazole-4-carboxamide + L-glutamine = D-erythro-1-(imidazol-4-yl)glycerol 3-phosphate + 5-amino-1-(5-phospho-beta-D-ribosyl)imidazole-4-carboxamide + L-glutamate + H(+). It carries out the reaction L-glutamine + H2O = L-glutamate + NH4(+). It participates in amino-acid biosynthesis; L-histidine biosynthesis; L-histidine from 5-phospho-alpha-D-ribose 1-diphosphate: step 5/9. In terms of biological role, IGPS catalyzes the conversion of PRFAR and glutamine to IGP, AICAR and glutamate. The HisH subunit provides the glutamine amidotransferase activity that produces the ammonia necessary to HisF for the synthesis of IGP and AICAR. The chain is Imidazole glycerol phosphate synthase subunit HisH 2 (hisH2) from Vibrio vulnificus (strain YJ016).